The chain runs to 373 residues: Flagellar P-ring protein (373 aa).

An N-terminal signal peptide occupies residues 1–26 (MKLFFRIVTLVAVVAMSLADMAPAWA).

Belongs to the FlgI family. The basal body constitutes a major portion of the flagellar organelle and consists of four rings (L,P,S, and M) mounted on a central rod.

It is found in the periplasm. The protein localises to the bacterial flagellum basal body. Assembles around the rod to form the L-ring and probably protects the motor/basal body from shearing forces during rotation. This chain is Flagellar P-ring protein, found in Rhizobium etli (strain ATCC 51251 / DSM 11541 / JCM 21823 / NBRC 15573 / CFN 42).